A 127-amino-acid polypeptide reads, in one-letter code: Small ribosomal subunit protein uS13 (127 aa).

Positions 92-127 are disordered; that stretch reads HRMGLPVRGQRTRTNARTRRGVRRTVAGKKKASAKK. Over residues 101-127 the composition is skewed to basic residues; that stretch reads QRTRTNARTRRGVRRTVAGKKKASAKK.

This sequence belongs to the universal ribosomal protein uS13 family. Part of the 30S ribosomal subunit. Forms a loose heterodimer with protein S19. Forms two bridges to the 50S subunit in the 70S ribosome.

Functionally, located at the top of the head of the 30S subunit, it contacts several helices of the 16S rRNA. In the 70S ribosome it contacts the 23S rRNA (bridge B1a) and protein L5 of the 50S subunit (bridge B1b), connecting the 2 subunits; these bridges are implicated in subunit movement. Contacts the tRNAs in the A and P-sites. This chain is Small ribosomal subunit protein uS13, found in Trichodesmium erythraeum (strain IMS101).